A 220-amino-acid polypeptide reads, in one-letter code: N-(5'-phosphoribosyl)anthranilate isomerase (220 aa).

It belongs to the TrpF family.

It carries out the reaction N-(5-phospho-beta-D-ribosyl)anthranilate = 1-(2-carboxyphenylamino)-1-deoxy-D-ribulose 5-phosphate. It functions in the pathway amino-acid biosynthesis; L-tryptophan biosynthesis; L-tryptophan from chorismate: step 3/5. The protein is N-(5'-phosphoribosyl)anthranilate isomerase of Leptothrix cholodnii (strain ATCC 51168 / LMG 8142 / SP-6) (Leptothrix discophora (strain SP-6)).